A 355-amino-acid polypeptide reads, in one-letter code: S-adenosylmethionine:tRNA ribosyltransferase-isomerase (355 aa).

Belongs to the QueA family. As to quaternary structure, monomer.

The protein resides in the cytoplasm. It catalyses the reaction 7-aminomethyl-7-carbaguanosine(34) in tRNA + S-adenosyl-L-methionine = epoxyqueuosine(34) in tRNA + adenine + L-methionine + 2 H(+). It functions in the pathway tRNA modification; tRNA-queuosine biosynthesis. Its function is as follows. Transfers and isomerizes the ribose moiety from AdoMet to the 7-aminomethyl group of 7-deazaguanine (preQ1-tRNA) to give epoxyqueuosine (oQ-tRNA). This is S-adenosylmethionine:tRNA ribosyltransferase-isomerase from Burkholderia cenocepacia (strain ATCC BAA-245 / DSM 16553 / LMG 16656 / NCTC 13227 / J2315 / CF5610) (Burkholderia cepacia (strain J2315)).